Consider the following 209-residue polypeptide: Small ribosomal subunit protein uS4 (209 aa).

The region spanning 98 to 161 is the S4 RNA-binding domain; sequence ARLDNVVYRM…RDLEVIKKAV (64 aa).

This sequence belongs to the universal ribosomal protein uS4 family. Part of the 30S ribosomal subunit. Contacts protein S5. The interaction surface between S4 and S5 is involved in control of translational fidelity.

Functionally, one of the primary rRNA binding proteins, it binds directly to 16S rRNA where it nucleates assembly of the body of the 30S subunit. In terms of biological role, with S5 and S12 plays an important role in translational accuracy. In Thermotoga petrophila (strain ATCC BAA-488 / DSM 13995 / JCM 10881 / RKU-1), this protein is Small ribosomal subunit protein uS4.